The sequence spans 545 residues: Methionine--tRNA ligase (545 aa).

Positions 13-23 match the 'HIGH' region motif; the sequence is PYANGPLHIGH. 4 residues coordinate Zn(2+): Cys144, Cys147, Cys157, and Cys160. The 'KMSKS' region motif lies at 330-334; that stretch reads KISKS. ATP is bound at residue Lys333.

This sequence belongs to the class-I aminoacyl-tRNA synthetase family. MetG type 1 subfamily. Monomer. Zn(2+) serves as cofactor.

It is found in the cytoplasm. The catalysed reaction is tRNA(Met) + L-methionine + ATP = L-methionyl-tRNA(Met) + AMP + diphosphate. Is required not only for elongation of protein synthesis but also for the initiation of all mRNA translation through initiator tRNA(fMet) aminoacylation. In Blochmanniella floridana, this protein is Methionine--tRNA ligase.